The following is a 469-amino-acid chain: Neuraminidase (469 aa).

Residues 1-9 are Intravirion-facing; that stretch reads MNPNQKIIT. The helical transmembrane segment at 10 to 30 threads the bilayer; it reads IGSVSLTIATICFLMQIAILV. The involved in apical transport and lipid raft association stretch occupies residues 11–33; sequence GSVSLTIATICFLMQIAILVTTV. Topologically, residues 31 to 469 are virion surface; that stretch reads TTVTLHFKQY…DGADINLMPI (439 aa). Positions 36-88 are hypervariable stalk region; sequence HFKQYECDSPANNQVMPCEPIIIERNITEIVYLTNTTIEKEICPKLVEYRNWS. N-linked (GlcNAc...) asparagine; by host glycosylation is found at N61, N70, and N86. The head of neuraminidase stretch occupies residues 91 to 469; the sequence is QCKITGFAPF…DGADINLMPI (379 aa). 8 disulfide bridges follow: C92–C417, C124–C129, C183–C230, C232–C237, C278–C291, C280–C289, C318–C337, and C421–C447. Residue R118 coordinates substrate. N146 carries an N-linked (GlcNAc...) asparagine; by host glycan. The active-site Proton donor/acceptor is the D151. R152 serves as a coordination point for substrate. 2 N-linked (GlcNAc...) asparagine; by host glycosylation sites follow: N200 and N234. Position 276–277 (276–277) interacts with substrate; the sequence is EE. R292 serves as a coordination point for substrate. Ca(2+) contacts are provided by D293, G297, and D324. Substrate is bound at residue R371. The active-site Nucleophile is the Y406.

The protein belongs to the glycosyl hydrolase 34 family. Homotetramer. Requires Ca(2+) as cofactor. Post-translationally, N-glycosylated.

It is found in the virion membrane. The protein resides in the host apical cell membrane. It catalyses the reaction Hydrolysis of alpha-(2-&gt;3)-, alpha-(2-&gt;6)-, alpha-(2-&gt;8)- glycosidic linkages of terminal sialic acid residues in oligosaccharides, glycoproteins, glycolipids, colominic acid and synthetic substrates.. Its activity is regulated as follows. Inhibited by the neuraminidase inhibitors zanamivir (Relenza) and oseltamivir (Tamiflu). These drugs interfere with the release of progeny virus from infected cells and are effective against all influenza strains. Resistance to neuraminidase inhibitors is quite rare. Its function is as follows. Catalyzes the removal of terminal sialic acid residues from viral and cellular glycoconjugates. Cleaves off the terminal sialic acids on the glycosylated HA during virus budding to facilitate virus release. Additionally helps virus spread through the circulation by further removing sialic acids from the cell surface. These cleavages prevent self-aggregation and ensure the efficient spread of the progeny virus from cell to cell. Otherwise, infection would be limited to one round of replication. Described as a receptor-destroying enzyme because it cleaves a terminal sialic acid from the cellular receptors. May facilitate viral invasion of the upper airways by cleaving the sialic acid moieties on the mucin of the airway epithelial cells. Likely to plays a role in the budding process through its association with lipid rafts during intracellular transport. May additionally display a raft-association independent effect on budding. Plays a role in the determination of host range restriction on replication and virulence. Sialidase activity in late endosome/lysosome traffic seems to enhance virus replication. The sequence is that of Neuraminidase from Aves (whales).